Reading from the N-terminus, the 89-residue chain is Small ribosomal subunit protein uS15 (89 aa).

This sequence belongs to the universal ribosomal protein uS15 family. As to quaternary structure, part of the 30S ribosomal subunit. Forms a bridge to the 50S subunit in the 70S ribosome, contacting the 23S rRNA.

One of the primary rRNA binding proteins, it binds directly to 16S rRNA where it helps nucleate assembly of the platform of the 30S subunit by binding and bridging several RNA helices of the 16S rRNA. Its function is as follows. Forms an intersubunit bridge (bridge B4) with the 23S rRNA of the 50S subunit in the ribosome. The polypeptide is Small ribosomal subunit protein uS15 (Pelotomaculum thermopropionicum (strain DSM 13744 / JCM 10971 / SI)).